The chain runs to 291 residues: MAGTKEIRTKIKSVQNTRKITKAMEMVAASKMRKAQERMRNARPYAEKVRNIAAHLASANPEFKHPFMQEREVKRVGMIVVTTDKGLCGGLNTNVLRAVTNELKTLQGRGVDVQATAIGGKGMQFLSRIGAKVVSNVVQLGDTPHLEKLIGAIKVQLDAFTNGEVDAVYLSYTRFINTMKQEPMVEQLLPLAADKLAQTEEEKRAYSWDYIYEPDAQTVVEDLLVRYVEALVYQAVAENMASEQSARMVAMKAASDNAKNVIGELQLDYNKTRQAAITKELSEIVSGAAAV.

Belongs to the ATPase gamma chain family. F-type ATPases have 2 components, CF(1) - the catalytic core - and CF(0) - the membrane proton channel. CF(1) has five subunits: alpha(3), beta(3), gamma(1), delta(1), epsilon(1). CF(0) has three main subunits: a, b and c.

The protein resides in the cell inner membrane. Produces ATP from ADP in the presence of a proton gradient across the membrane. The gamma chain is believed to be important in regulating ATPase activity and the flow of protons through the CF(0) complex. This chain is ATP synthase gamma chain, found in Cupriavidus pinatubonensis (strain JMP 134 / LMG 1197) (Cupriavidus necator (strain JMP 134)).